The sequence spans 188 residues: Ribosome maturation factor RimM (188 aa).

Residues 96 to 169 enclose the PRC barrel domain; it reads DDEFYYADLE…TLLIDPLAAG (74 aa).

Belongs to the RimM family. As to quaternary structure, binds ribosomal protein uS19.

It localises to the cytoplasm. Its function is as follows. An accessory protein needed during the final step in the assembly of 30S ribosomal subunit, possibly for assembly of the head region. Essential for efficient processing of 16S rRNA. May be needed both before and after RbfA during the maturation of 16S rRNA. It has affinity for free ribosomal 30S subunits but not for 70S ribosomes. In Rhizobium etli (strain ATCC 51251 / DSM 11541 / JCM 21823 / NBRC 15573 / CFN 42), this protein is Ribosome maturation factor RimM.